The sequence spans 101 residues: Urease subunit beta (101 aa).

It belongs to the urease beta subunit family. As to quaternary structure, heterotrimer of UreA (gamma), UreB (beta) and UreC (alpha) subunits. Three heterotrimers associate to form the active enzyme.

The protein localises to the cytoplasm. The enzyme catalyses urea + 2 H2O + H(+) = hydrogencarbonate + 2 NH4(+). Its pathway is nitrogen metabolism; urea degradation; CO(2) and NH(3) from urea (urease route): step 1/1. This Hahella chejuensis (strain KCTC 2396) protein is Urease subunit beta.